The primary structure comprises 275 residues: Phosphonoacetaldehyde hydrolase (275 aa).

D15 serves as the catalytic Nucleophile. Mg(2+) contacts are provided by D15 and A17. The active-site Schiff-base intermediate with substrate is K56. A Mg(2+)-binding site is contributed by D189.

Belongs to the HAD-like hydrolase superfamily. PhnX family. In terms of assembly, homodimer. Mg(2+) serves as cofactor.

It carries out the reaction phosphonoacetaldehyde + H2O = acetaldehyde + phosphate + H(+). Involved in phosphonate degradation. This is Phosphonoacetaldehyde hydrolase from Pseudomonas paraeruginosa (strain DSM 24068 / PA7) (Pseudomonas aeruginosa (strain PA7)).